Reading from the N-terminus, the 298-residue chain is Olfactory receptor 5AK3 (298 aa).

At 1–25 (MGRGNSTEVTEFHLLGFGVQHEFQH) the chain is on the extracellular side. Asn-5 carries an N-linked (GlcNAc...) asparagine glycan. A helical transmembrane segment spans residues 26 to 46 (VLFIVLLLIYVTSLIGNIGMI). Topologically, residues 47–54 (LLIKTDSR) are cytoplasmic. A helical transmembrane segment spans residues 55 to 75 (LQTPMYFFPQHLAFVDICYTS). Residues 76–99 (AITPKMLQSFTEENNLITFRGCVI) are Extracellular-facing. Cysteines 97 and 189 form a disulfide. The helical transmembrane segment at 100–120 (QFLVYATFATSDCYLLAIMAM) threads the bilayer. Residues 121-133 (DCYVAICKPLRYP) are Cytoplasmic-facing. A helical transmembrane segment spans residues 134–154 (MIMSQTVYIQLVAGSYIIGSI). Asn-155 carries N-linked (GlcNAc...) asparagine glycosylation. The Extracellular segment spans residues 155–196 (NASVHTGFTFSLSFCKSNKINHFFCDGLPILALSCSNIDINI). A helical membrane pass occupies residues 197-217 (ILDVVFVGFDLMFTELVIIFS). Over 218–237 (YIYIMVTILKMSSTAGRKKS) the chain is Cytoplasmic. A helical transmembrane segment spans residues 238 to 258 (FSTCASHLTAVTIFYGTLSYM). Residues 259 to 271 (YLQPQSNNSQENM) lie on the Extracellular side of the membrane. An N-linked (GlcNAc...) asparagine glycan is attached at Asn-265. The helical transmembrane segment at 272–292 (KVASIFYGTVIPMLNPLIYSL) threads the bilayer. The Cytoplasmic segment spans residues 293-298 (RNKEGK).

It belongs to the G-protein coupled receptor 1 family.

It is found in the cell membrane. Functionally, odorant receptor. The protein is Olfactory receptor 5AK3 (OR5AK3P) of Homo sapiens (Human).